The sequence spans 92 residues: MTKLAQWLWGLAILGSTWVALTTGALGLELPLSCQEVLWPLPAYLLVSAGCYALGTVGYRVATFHDCEDAARELQSQIQEARADLARRGLRF.

2 consecutive transmembrane segments (helical) span residues 8 to 28 (LWGL…ALGL) and 37 to 57 (VLWP…LGTV).

This sequence belongs to the DPM3 family. Component of the dolichol-phosphate mannose (DPM) synthase complex composed of DPM1, DPM2 and DPM3; within the complex, associates with DPM1 via its C-terminal domain and with DPM2 via its N-terminal portion. This interaction stabilizes DPM1 protein.

Its subcellular location is the endoplasmic reticulum membrane. It functions in the pathway protein modification; protein glycosylation. In terms of biological role, stabilizer subunit of the dolichol-phosphate mannose (DPM) synthase complex; tethers catalytic subunit DPM1 to the endoplasmic reticulum. This is Dolichol-phosphate mannosyltransferase subunit 3 (DPM3) from Homo sapiens (Human).